The primary structure comprises 160 residues: Transcriptional repressor NrdR (160 aa).

Residues Cys3–Cys34 fold into a zinc finger. The 91-residue stretch at Leu49–Asp139 folds into the ATP-cone domain.

Belongs to the NrdR family. Zn(2+) serves as cofactor.

In terms of biological role, negatively regulates transcription of bacterial ribonucleotide reductase nrd genes and operons by binding to NrdR-boxes. In Bartonella bacilliformis (strain ATCC 35685 / KC583 / Herrer 020/F12,63), this protein is Transcriptional repressor NrdR.